A 106-amino-acid chain; its full sequence is Iron-sulfur cluster assembly protein CyaY (106 aa).

It belongs to the frataxin family.

Its function is as follows. Involved in iron-sulfur (Fe-S) cluster assembly. May act as a regulator of Fe-S biogenesis. The polypeptide is Iron-sulfur cluster assembly protein CyaY (Shigella flexneri).